Reading from the N-terminus, the 120-residue chain is Ribonuclease P protein component (120 aa).

This sequence belongs to the RnpA family. In terms of assembly, consists of a catalytic RNA component (M1 or rnpB) and a protein subunit.

The catalysed reaction is Endonucleolytic cleavage of RNA, removing 5'-extranucleotides from tRNA precursor.. Functionally, RNaseP catalyzes the removal of the 5'-leader sequence from pre-tRNA to produce the mature 5'-terminus. It can also cleave other RNA substrates such as 4.5S RNA. The protein component plays an auxiliary but essential role in vivo by binding to the 5'-leader sequence and broadening the substrate specificity of the ribozyme. This Dictyoglomus thermophilum (strain ATCC 35947 / DSM 3960 / H-6-12) protein is Ribonuclease P protein component.